The primary structure comprises 603 residues: Prostaglandin G/H synthase 2 (603 aa).

Positions 1–17 are cleaved as a signal peptide; sequence MLLPCALLAALLAAGHA. The 38-residue stretch at 18–55 folds into the EGF-like domain; the sequence is ANPCCSLPCQNRGVCMTTGFDRYECDCTRTGYYGENCT. 4 disulfide bridges follow: Cys-21/Cys-32, Cys-22/Cys-145, Cys-26/Cys-42, and Cys-44/Cys-54. 2 N-linked (GlcNAc...) asparagine glycosylation sites follow: Asn-53 and Asn-90. Arg-106 contacts substrate. An N-linked (GlcNAc...) asparagine glycan is attached at Asn-130. The active-site Proton acceptor is the His-193. Tyr-341 lines the substrate pocket. The active-site For cyclooxygenase activity is Tyr-371. His-374 contacts heme b. Cysteines 555 and 561 form a disulfide.

It belongs to the prostaglandin G/H synthase family. In terms of assembly, homodimer. Heme b is required as a cofactor.

The protein localises to the microsome membrane. The protein resides in the endoplasmic reticulum membrane. The enzyme catalyses (5Z,8Z,11Z,14Z)-eicosatetraenoate + AH2 + 2 O2 = prostaglandin H2 + A + H2O. It carries out the reaction (9Z,12Z)-octadecadienoate + AH2 + O2 = (9R)-hydroxy-(10E,12Z)-octadecadienoate + A + H2O. The catalysed reaction is (9Z,12Z)-octadecadienoate + AH2 + O2 = (9S)-hydroxy-(10E,12Z)-octadecadienoate + A + H2O. It catalyses the reaction (9Z,12Z)-octadecadienoate + AH2 + O2 = (13S)-hydroxy-(9Z,11E)-octadecadienoate + A + H2O. The enzyme catalyses (9Z,12Z)-octadecadienoate + AH2 + O2 = (13R)-hydroxy-(9Z,11E)-octadecadienoate + A + H2O. It participates in lipid metabolism; prostaglandin biosynthesis. In terms of biological role, dual cyclooxygenase and peroxidase in the biosynthesis pathway of prostanoids, a class of C20 oxylipins mainly derived from arachidonate ((5Z,8Z,11Z,14Z)-eicosatetraenoate, AA, C20:4(n-6)), with a particular role in the inflammatory response. The cyclooxygenase activity oxygenates AA to the hydroperoxy endoperoxide prostaglandin G2 (PGG2), and the peroxidase activity reduces PGG2 to the hydroxy endoperoxide prostaglandin H2 (PGH2), the precursor of all 2-series prostaglandins and thromboxanes. This complex transformation is initiated by abstraction of hydrogen at carbon 13 (with S-stereochemistry), followed by insertion of molecular O2 to form the endoperoxide bridge between carbon 9 and 11 that defines prostaglandins. The insertion of a second molecule of O2 (bis-oxygenase activity) yields a hydroperoxy group in PGG2 that is then reduced to PGH2 by two electrons. Similarly catalyzes successive cyclooxygenation and peroxidation of dihomo-gamma-linoleate (DGLA, C20:3(n-6)) and eicosapentaenoate (EPA, C20:5(n-3)) to corresponding PGH1 and PGH3, the precursors of 1- and 3-series prostaglandins. In an alternative pathway of prostanoid biosynthesis, converts 2-arachidonoyl lysophopholipids to prostanoid lysophopholipids, which are then hydrolyzed by intracellular phospholipases to release free prostanoids. Metabolizes 2-arachidonoyl glycerol yielding the glyceryl ester of PGH2, a process that can contribute to pain response. Generates lipid mediators from n-3 and n-6 polyunsaturated fatty acids (PUFAs) via a lipoxygenase-type mechanism. Oxygenates PUFAs to hydroperoxy compounds and then reduces them to corresponding alcohols. Plays a role in the generation of resolution phase interaction products (resolvins) during both sterile and infectious inflammation. Metabolizes docosahexaenoate (DHA, C22:6(n-3)) to 17R-HDHA, a precursor of the D-series resolvins (RvDs). As a component of the biosynthetic pathway of E-series resolvins (RvEs), converts eicosapentaenoate (EPA, C20:5(n-3)) primarily to 18S-HEPE that is further metabolized by ALOX5 and LTA4H to generate 18S-RvE1 and 18S-RvE2. In vascular endothelial cells, converts docosapentaenoate (DPA, C22:5(n-3)) to 13R-HDPA, a precursor for 13-series resolvins (RvTs) shown to activate macrophage phagocytosis during bacterial infection. In activated leukocytes, contributes to oxygenation of hydroxyeicosatetraenoates (HETE) to diHETES (5,15-diHETE and 5,11-diHETE). Can also use linoleate (LA, (9Z,12Z)-octadecadienoate, C18:2(n-6)) as substrate and produce hydroxyoctadecadienoates (HODEs) in a regio- and stereospecific manner, being (9R)-HODE ((9R)-hydroxy-(10E,12Z)-octadecadienoate) and (13S)-HODE ((13S)-hydroxy-(9Z,11E)-octadecadienoate) its major products. During neuroinflammation, plays a role in neuronal secretion of specialized preresolving mediators (SPMs) 15R-lipoxin A4 that regulates phagocytic microglia. The protein is Prostaglandin G/H synthase 2 (PTGS2) of Gallus gallus (Chicken).